The sequence spans 219 residues: Putative mediator of RNA polymerase II transcription subunit 10 (219 aa).

Residues 1–39 (MEQQQPQQQNDGQQQQQQQQQHQQQQQQQQQQQQQQQQS) show a composition bias toward low complexity. Disordered stretches follow at residues 1-42 (MEQQ…SEQE) and 177-219 (KETQ…INNN). Coiled coils occupy residues 13–74 (QQQQ…VVEE) and 166–219 (EYAE…INNN). The span at 177–192 (KETQEQQNDDQIKVDD) shows a compositional bias: basic and acidic residues. Low complexity predominate over residues 194–219 (NNNNNNNNNNNYNNNNNNNNNNINNN).

Belongs to the Mediator complex subunit 10 family. In terms of assembly, component of the Mediator complex.

It is found in the nucleus. Component of the Mediator complex, a coactivator involved in the regulated transcription of nearly all RNA polymerase II-dependent genes. Mediator functions as a bridge to convey information from gene-specific regulatory proteins to the basal RNA polymerase II transcription machinery. Mediator is recruited to promoters by direct interactions with regulatory proteins and serves as a scaffold for the assembly of a functional preinitiation complex with RNA polymerase II and the general transcription factors. This is Putative mediator of RNA polymerase II transcription subunit 10 (med10) from Dictyostelium discoideum (Social amoeba).